Here is a 130-residue protein sequence, read N- to C-terminus: 3-aminoacrylate deaminase RutC (130 aa).

Belongs to the RutC family.

The enzyme catalyses (Z)-3-aminoacrylate + H2O + H(+) = 3-oxopropanoate + NH4(+). Functionally, involved in pyrimidine catabolism. Catalyzes the deamination of 3-aminoacrylate to malonic semialdehyde, a reaction that can also occur spontaneously. RutC may facilitate the reaction and modulate the metabolic fitness, rather than catalyzing essential functions. The sequence is that of 3-aminoacrylate deaminase RutC from Klebsiella pneumoniae (strain 342).